Here is a 355-residue protein sequence, read N- to C-terminus: Ubiquinone biosynthesis protein COQ4 homolog, mitochondrial (355 aa).

The Zn(2+) site is built by histidine 134, aspartate 135, histidine 138, and glutamate 150.

It belongs to the COQ4 family. As to quaternary structure, component of a multi-subunit COQ enzyme complex. The cofactor is Zn(2+).

Its subcellular location is the mitochondrion inner membrane. It catalyses the reaction a 4-hydroxy-3-methoxy-5-(all-trans-polyprenyl)benzoate + H(+) = a 2-methoxy-6-(all-trans-polyprenyl)phenol + CO2. It functions in the pathway cofactor biosynthesis; ubiquinone biosynthesis. In terms of biological role, lyase that catalyzes the C1-decarboxylation of 4-hydroxy-3-methoxy-5-(all-trans-polyprenyl)benzoic acid into 2-methoxy-6-(all-trans-polyprenyl)phenol during ubiquinone biosynthesis. The protein is Ubiquinone biosynthesis protein COQ4 homolog, mitochondrial of Plasmodium yoelii yoelii.